We begin with the raw amino-acid sequence, 324 residues long: uncharacterized protein (324 aa).

A compositionally biased stretch (polar residues) spans 1–11; it reads MNTNINVNGSN. Disordered stretches follow at residues 1-77, 132-194, and 272-324; these read MNTN…YSYS, NNHY…NNNN, and DENI…DNDS. Residues 21 to 64 are compositionally biased toward low complexity; it reads NENNNNNNGRNNNTNNNNNGRYNNNNNNNNNNNNNNYNLNMNST. Residues 279–324 show a composition bias toward low complexity; the sequence is SNNNNNNNNNNNNSYNVNICRNNSNFNVNENNGGDNNNDNNNDNDS.

This is an uncharacterized protein from Dictyostelium discoideum (Social amoeba).